The sequence spans 373 residues: Cobalt-precorrin-5B C(1)-methyltransferase (373 aa).

This sequence belongs to the CbiD family.

It catalyses the reaction Co-precorrin-5B + S-adenosyl-L-methionine = Co-precorrin-6A + S-adenosyl-L-homocysteine. Its pathway is cofactor biosynthesis; adenosylcobalamin biosynthesis; cob(II)yrinate a,c-diamide from sirohydrochlorin (anaerobic route): step 6/10. Functionally, catalyzes the methylation of C-1 in cobalt-precorrin-5B to form cobalt-precorrin-6A. The chain is Cobalt-precorrin-5B C(1)-methyltransferase from Listeria monocytogenes serotype 4a (strain HCC23).